The primary structure comprises 674 residues: CLK4-associating serine/arginine rich protein (674 aa).

Position 101 is a phosphoserine (serine 101). 2 disordered regions span residues 171–232 and 258–674; these read TVAE…GMAD and EKAM…HYRH. Acidic residues predominate over residues 182-214; the sequence is PEEEESAAEEESNSDEDEVIPDIDVEVDVDELN. Basic residues predominate over residues 265–283; sequence RRSRRQRREFREKRLRGRK. Residues serine 285 and serine 294 each carry the phosphoserine modification. Residues 290–313 show a composition bias toward basic and acidic residues; it reads ARRDSPTYDPYKRSPSESSSESRS. Residue threonine 327 is modified to Phosphothreonine. Residues serine 331 and serine 335 each carry the phosphoserine modification. Residues 356–365 are compositionally biased toward pro residues; sequence PPAPPQPGGP. The span at 378-399 shows a compositional bias: low complexity; sequence SSSSSSSSASRTSSSRSSSRSS. Composition is skewed to basic residues over residues 411–443 and 481–492; these read SGRH…RRHS and RGGRGLRHHSSS. 2 stretches are compositionally biased toward low complexity: residues 493-506 and 514-532; these read RSRS…SRSR and HSPS…SQSP. Serine 547 is modified (phosphoserine). The residue at position 573 (threonine 573) is a Phosphothreonine. The stretch at 585–647 forms a coiled coil; sequence ALNRQFKADK…ERQYSRQSRS (63 aa). Basic and acidic residues-rich tracts occupy residues 590–617 and 625–641; these read FKAD…ELRA and KERE…ERQY. Low complexity predominate over residues 642 to 651; sequence SRQSRSPSPR. Positions 659–674 are enriched in basic residues; the sequence is SRRRSRSRSRSPHYRH.

It belongs to the splicing factor SR family. Probably interacts with CLK4. Phosphorylated in vitro by CLK4.

The protein localises to the nucleus. Probably functions as an alternative splicing regulator. May regulate the mRNA splicing of genes such as CLK1. May act by regulating members of the CLK kinase family. This chain is CLK4-associating serine/arginine rich protein (CLASRP), found in Homo sapiens (Human).